Reading from the N-terminus, the 218-residue chain is Pyridoxine/pyridoxamine 5'-phosphate oxidase (218 aa).

Substrate contacts are provided by residues 14–17 and Lys72; that span reads RREY. FMN is bound by residues 67–72, 82–83, Arg88, Lys89, and Gln111; these read RIVLLK and YT. Positions 129, 133, and 137 each coordinate substrate. Residues 146-147 and Trp191 each bind FMN; that span reads QS. Residue 197–199 participates in substrate binding; the sequence is RLH. Arg201 contacts FMN.

The protein belongs to the pyridoxamine 5'-phosphate oxidase family. In terms of assembly, homodimer. The cofactor is FMN.

It carries out the reaction pyridoxamine 5'-phosphate + O2 + H2O = pyridoxal 5'-phosphate + H2O2 + NH4(+). The enzyme catalyses pyridoxine 5'-phosphate + O2 = pyridoxal 5'-phosphate + H2O2. It functions in the pathway cofactor metabolism; pyridoxal 5'-phosphate salvage; pyridoxal 5'-phosphate from pyridoxamine 5'-phosphate: step 1/1. The protein operates within cofactor metabolism; pyridoxal 5'-phosphate salvage; pyridoxal 5'-phosphate from pyridoxine 5'-phosphate: step 1/1. Catalyzes the oxidation of either pyridoxine 5'-phosphate (PNP) or pyridoxamine 5'-phosphate (PMP) into pyridoxal 5'-phosphate (PLP). The protein is Pyridoxine/pyridoxamine 5'-phosphate oxidase of Escherichia coli (strain SMS-3-5 / SECEC).